The sequence spans 261 residues: Carbonic anhydrase 1 (261 aa).

A2 carries the post-translational modification N-acetylalanine. Residues 4–261 (PDWGYDGENG…LKGRTVKASF (258 aa)) enclose the Alpha-carbonic anhydrase domain. The segment at 22 to 41 (PIANGNNQSPIDIKTSETKR) is disordered. Catalysis depends on H65, which acts as the Proton donor/acceptor. Positions 95, 97, and 120 each coordinate Zn(2+). Substrate contacts are provided by residues T200 and 200 to 201 (TH).

It belongs to the alpha-carbonic anhydrase family. Zn(2+) is required as a cofactor.

It localises to the cytoplasm. The catalysed reaction is hydrogencarbonate + H(+) = CO2 + H2O. It carries out the reaction urea = cyanamide + H2O. Its activity is regulated as follows. Inhibited by acetazolamide. In terms of biological role, catalyzes the reversible hydration of carbon dioxide. Can hydrate cyanamide to urea. This Ovis aries (Sheep) protein is Carbonic anhydrase 1 (CA1).